The following is a 428-amino-acid chain: Enolase (428 aa).

Gln-163 contacts (2R)-2-phosphoglycerate. Glu-205 acts as the Proton donor in catalysis. Mg(2+) is bound by residues Asp-242, Glu-285, and Asp-312. Residues Lys-337, Arg-366, Ser-367, and Lys-388 each coordinate (2R)-2-phosphoglycerate. Lys-337 acts as the Proton acceptor in catalysis.

Belongs to the enolase family. Requires Mg(2+) as cofactor.

The protein resides in the cytoplasm. It is found in the secreted. Its subcellular location is the cell surface. It carries out the reaction (2R)-2-phosphoglycerate = phosphoenolpyruvate + H2O. It functions in the pathway carbohydrate degradation; glycolysis; pyruvate from D-glyceraldehyde 3-phosphate: step 4/5. Its function is as follows. Catalyzes the reversible conversion of 2-phosphoglycerate (2-PG) into phosphoenolpyruvate (PEP). It is essential for the degradation of carbohydrates via glycolysis. This Carboxydothermus hydrogenoformans (strain ATCC BAA-161 / DSM 6008 / Z-2901) protein is Enolase.